Reading from the N-terminus, the 515-residue chain is Histidine ammonia-lyase (515 aa).

Positions 146-148 form a cross-link, 5-imidazolinone (Ala-Gly); the sequence is ASG. The residue at position 147 (serine 147) is a 2,3-didehydroalanine (Ser).

It belongs to the PAL/histidase family. Contains an active site 4-methylidene-imidazol-5-one (MIO), which is formed autocatalytically by cyclization and dehydration of residues Ala-Ser-Gly.

It localises to the cytoplasm. It catalyses the reaction L-histidine = trans-urocanate + NH4(+). It functions in the pathway amino-acid degradation; L-histidine degradation into L-glutamate; N-formimidoyl-L-glutamate from L-histidine: step 1/3. The polypeptide is Histidine ammonia-lyase (hutH) (Ralstonia nicotianae (strain ATCC BAA-1114 / GMI1000) (Ralstonia solanacearum)).